A 357-amino-acid chain; its full sequence is Large ribosomal subunit protein uL10 (357 aa).

Positions 311–357 (MVSRSAEAAERKEKEEEEEEEAEEEEAEEEEEEEEEEAAAGLGALFG) are disordered. A compositionally biased stretch (acidic residues) spans 325-348 (EEEEEEEAEEEEAEEEEEEEEEEA).

Belongs to the universal ribosomal protein uL10 family. In terms of assembly, part of the 50S ribosomal subunit. Forms part of the ribosomal stalk which helps the ribosome interact with GTP-bound translation factors. Forms a heptameric L10(L12)2(L12)2(L12)2 complex, where L10 forms an elongated spine to which the L12 dimers bind in a sequential fashion.

Its function is as follows. Forms part of the ribosomal stalk, playing a central role in the interaction of the ribosome with GTP-bound translation factors. The sequence is that of Large ribosomal subunit protein uL10 from Methanopyrus kandleri (strain AV19 / DSM 6324 / JCM 9639 / NBRC 100938).